A 396-amino-acid polypeptide reads, in one-letter code: Elongation factor Tu (396 aa).

The tr-type G domain maps to 11 to 205; that stretch reads KPHVNIGTIG…VIDDYIPTPK (195 aa). The segment at 20 to 27 is G1; the sequence is GHVDHGKT. GTP is bound at residue 20–27; it reads GHVDHGKT. Mg(2+) is bound at residue threonine 27. The G2 stretch occupies residues 61–65; it reads GITIN. The segment at 82–85 is G3; sequence DAPG. Residues 82–86 and 137–140 contribute to the GTP site; these read DAPGH and NKTD. The interval 137–140 is G4; it reads NKTD. The tract at residues 175 to 177 is G5; sequence SAL.

It belongs to the TRAFAC class translation factor GTPase superfamily. Classic translation factor GTPase family. EF-Tu/EF-1A subfamily. As to quaternary structure, monomer.

Its subcellular location is the cytoplasm. The catalysed reaction is GTP + H2O = GDP + phosphate + H(+). GTP hydrolase that promotes the GTP-dependent binding of aminoacyl-tRNA to the A-site of ribosomes during protein biosynthesis. In Limosilactobacillus reuteri (strain DSM 20016) (Lactobacillus reuteri), this protein is Elongation factor Tu.